The sequence spans 534 residues: Cytochrome P450 monooxygenase CYP4 (534 aa).

Residues 46-66 (TIIFCVLMSLVGYIVSRIIWG) traverse the membrane as a helical segment. The N-linked (GlcNAc...) asparagine glycan is linked to Asn220. Cys477 is a heme binding site. Asn515 is a glycosylation site (N-linked (GlcNAc...) asparagine).

It belongs to the cytochrome P450 family. Heme serves as cofactor.

It localises to the membrane. It participates in secondary metabolite biosynthesis. Functionally, cytochrome P450 monooxygenase; part of the gene cluster that mediates the biosynthesis of a tyrosine-derived cytochalasan acting as a fungal signal recognized by resistant rice plants and leads to avirulence in Pi33 resistant rice cultivars. The first step in the pathway is catalyzed by the hybrid PKS-NRPS ACE1, assisted by the enoyl reductase RAP1, that are responsible for fusion of the tyrosine precursor and the polyketide backbone. The polyketide synthase module (PKS) of ACE1 is responsible for the synthesis of the polyketide backbone and the downstream nonribosomal peptide synthetase (NRPS) amidates the carboxyl end of the polyketide with the tyrosine precursor. Because ACE1 lacks a designated enoylreductase (ER) domain, the required activity is provided the enoyl reductase RAP1. Reduction by the hydrolyase ORFZ, followed by dehydration and intra-molecular Diels-Alder cyclization by the Diels-Alderase ORF3 then yield the required isoindolone-fused macrocycle. A number of oxidative steps catalyzed by the tailoring enzymes identified within the cluster, including cytochrome P450 monooxygenases CYP1 to CYP4, the FAD-linked oxidoreductase OXR2 and the short-chain dehydrogenase/reductase OXR1, are further required to afford the final cytochalasans that confer avirulence and which have still to be identified. The monooxygenase CYP1 has been shown to be a site-selective C-18 hydroxylase whereas the function of CYP3 is the site-selective epoxidation of the C-6/C-7 olefin that is present in some intermediate compounds. Finally, SYN2 and RAP2 are not required for avirulence in Pi33 resistant rice cultivars. The polypeptide is Cytochrome P450 monooxygenase CYP4 (Pyricularia oryzae (strain 70-15 / ATCC MYA-4617 / FGSC 8958) (Rice blast fungus)).